A 148-amino-acid polypeptide reads, in one-letter code: Receptor activity-modifying protein 1 (148 aa).

The signal sequence occupies residues 1 to 26 (MAPGLRGLPRRGLWLLLAHHLFMVTA). 3 cysteine pairs are disulfide-bonded: C27–C82, C40–C72, and C57–C104. Residues 27 to 118 (CRDPDYGTLI…RALRDPPNSI (92 aa)) lie on the Extracellular side of the membrane. The chain crosses the membrane as a helical span at residues 119–140 (LCPFIVLPITVTLLMTALVVWR). Residues 141-148 (SKRTEGIV) lie on the Cytoplasmic side of the membrane.

This sequence belongs to the RAMP family. In terms of assembly, heterodimer of CALCRL and RAMP1; the interaction induces allosteric modulation of CALCRL function and CGRP1/CALCA and CGRP2/CALCB ligand specificity. Heterodimer of CALCR and RAMP1; interaction forms the AMYR1 receptor complex for amylin/IAPP and CGRP1/CALCA ligands.

The protein resides in the cell membrane. Functionally, accessory protein that interacts with and modulates the function of G-protein coupled receptors including calcitonin gene-related peptide type 1 receptor (CALCRL) and calcitonin receptor (CALCR). Required for the transport of CALCRL to the plasma membrane. Together with CALCRL, form the receptor complex for the calcitonin gene-related peptides CGRP1/CALCA and CGRP2/CALCB. Together with CALCR, form the AMYR1 receptor complex for amylin/IAPP and CGRP1/CALCA. The protein is Receptor activity-modifying protein 1 of Rattus norvegicus (Rat).